We begin with the raw amino-acid sequence, 1954 residues long: Protein abnormal spindle (1954 aa).

The disordered stretch occupies residues 134 to 155; it reads VKNPRKFPTVGKTLQLKSPTGA. Residues Ser-151 and Ser-360 each carry the phosphoserine modification. A Phosphothreonine modification is found at Thr-364. Residues Ser-388, Ser-390, Ser-395, Ser-398, Ser-491, Ser-495, Ser-497, Ser-501, Ser-504, and Ser-514 each carry the phosphoserine modification. Positions 476–548 are disordered; it reads KSVKGSPVKN…SSSAHAWPHA (73 aa). The segment covering 498–507 has biased composition (polar residues); the sequence is DAPSNESLYR. The segment covering 528 to 548 has biased composition (low complexity); it reads RSAAPANASARSSSAHAWPHA. The 133-residue stretch at 836-968 folds into the Calponin-homology (CH) domain; sequence KETKDILLRF…LLWQLIYKFR (133 aa). IQ domains follow at residues 1004–1033, 1386–1415, and 1467–1496; these read RHRA…ERTQ, TQAA…QLRQ, and QREA…KQRQ. The stretch at 1614–1641 forms a coiled coil; that stretch reads RANRSMKQARQEFVQLRTIAVHLQQKFR. IQ domains are found at residues 1656-1687 and 1690-1721; these read LRCS…MMDL and QKRA…IRKR.

The protein resides in the cytoplasm. The protein localises to the nucleus. It localises to the cytoskeleton. Its subcellular location is the spindle. It is found in the microtubule organizing center. The protein resides in the perinuclear region. Required to maintain the structure of the centrosomal microtubule organizing center (MTOC) during mitosis. May have a preferential role in regulating neurogenesis. Required for germ cell mitosis and oocyte differentiation. This Drosophila melanogaster (Fruit fly) protein is Protein abnormal spindle.